A 275-amino-acid polypeptide reads, in one-letter code: MQRSVLHTASQLAHGMCLLFPRTGAFRGLKGPSVSSNVGCKVILALDPPKRCLHAGAALFASKSSAVSSQPADTPRKVPEEREPLTSATEVPKQSPVESDASDPDPLQDKSISLVQRFKKTFKQYGKVMIPVHLVTSTVWFGSFYYAAMKGVNVVPFLELIGLPDSIVDILKNSQSGNALTAYALYKIATPARYTVTLGGTSITVKYLRKNGYMSTPPPVKEYLQDRMEETKDKITEKMEETKDKITEKMEETKDKITEKIQETKDKVSFKKIKD.

Residues 68 to 108 (SSQPADTPRKVPEEREPLTSATEVPKQSPVESDASDPDPLQ) are disordered. Residues 74 to 84 (TPRKVPEEREP) show a composition bias toward basic and acidic residues. In terms of domain architecture, DUF1279 spans 109-221 (DKSISLVQRF…GYMSTPPPVK (113 aa)). A helical transmembrane segment spans residues 128–148 (VMIPVHLVTSTVWFGSFYYAA). Residues 221 to 271 (KEYLQDRMEETKDKITEKMEETKDKITEKMEETKDKITEKIQETKDKVSFK) are a coiled coil.

This sequence belongs to the FAM210 family. Interacts with ATAD3A.

It localises to the membrane. Its subcellular location is the mitochondrion. The protein localises to the cytoplasm. Functionally, may play a role in the structure and strength of both muscle and bone. In Gallus gallus (Chicken), this protein is Protein FAM210A (FAM210A).